The following is a 315-amino-acid chain: Voltage-dependent calcium channel gamma-3 subunit (315 aa).

4 helical membrane-spanning segments follow: residues 8–28, 104–124, 135–155, and 181–201; these read VQML…TIAV, SSVF…CVAA, ILSA…GIIV, and FGAF…HIYI. The segment at 232–252 is disordered; the sequence is RRRSSSRSTEPRSRDLSPISK. At serine 248 the chain carries Phosphoserine.

It belongs to the PMP-22/EMP/MP20 family. CACNG subfamily. As to quaternary structure, the L-type calcium channel is composed of five subunits: alpha-1, alpha-2/delta, beta and gamma. Acts as an auxiliary subunit for AMPA-selective glutamate receptors (AMPARs). Found in a complex with GRIA1, GRIA2, GRIA3, GRIA4, CNIH2, CNIH3, CACNG2, CACNG4, CACNG5, CACNG7 and CACNG8. Interacts with AP4M1 and GRIA1; associates GRIA1 with the adaptor protein complex 4 (AP-4) to target GRIA1 to the somatodendritic compartment of neurons.

The protein localises to the membrane. Functionally, regulates the trafficking and gating properties of AMPA-selective glutamate receptors (AMPARs). Promotes their targeting to the cell membrane and synapses and modulates their gating properties by slowing their rates of activation, deactivation and desensitization. Does not show subunit-specific AMPA receptor regulation and regulates all AMPAR subunits. Thought to stabilize the calcium channel in an inactivated (closed) state. The chain is Voltage-dependent calcium channel gamma-3 subunit (CACNG3) from Bos taurus (Bovine).